Consider the following 87-residue polypeptide: U14-lycotoxin-Ls1c (87 aa).

The signal sequence occupies residues 1–20; that stretch reads MNSKVFAVLLLLALLTCILS. The region spanning 21-66 is the WAP domain; that stretch reads EKYCPTPRNTSCKKMNIKNNCCRDSDCTSNAFCCAEPCGNFCHKAS. 5 disulfide bridges follow: Cys24–Cys54, Cys32–Cys58, Cys41–Cys53, Cys42–Cys80, and Cys47–Cys62.

The protein belongs to the venom protein 11 family. 01 (wap-1) subfamily. In terms of processing, contains 5 disulfide bonds. Expressed by the venom gland.

It localises to the secreted. Functionally, has antibacterial activity. This Lycosa singoriensis (Wolf spider) protein is U14-lycotoxin-Ls1c.